The following is a 456-amino-acid chain: Chaperone protein dnaJ GFA2, mitochondrial (456 aa).

Residues 1-89 constitute a mitochondrion transit peptide; it reads MVPSNGAKVL…RSFHGTGSSF (89 aa). Residues 94–159 form the J domain; that stretch reads DYYSVLGVSK…EKRDLYDQVG (66 aa). The CR-type zinc-finger motif lies at 225 to 303; that stretch reads GCSKTVTFQT…CRGARVVRGQ (79 aa). Residues C238, C241, C255, C258, C277, C280, C291, and C294 each coordinate Zn(2+). CXXCXGXG motif repeat units follow at residues 238–245, 255–262, 277–284, and 291–298; these read CNTCGGQG, CKACNGSG, CQKCGGAG, and CKSCRGAR.

It belongs to the DnaJ family. In terms of tissue distribution, widely expressed.

The protein localises to the mitochondrion. Functionally, chaperone that may play a role in mitochondrial protein folding. Involved in female gametophyte development. Required for cell death of the synergid cells during fertilization process, and fusion of the polar nuclei during megagametogenesis. This Arabidopsis thaliana (Mouse-ear cress) protein is Chaperone protein dnaJ GFA2, mitochondrial.